The following is a 478-amino-acid chain: 2,5-dioxopentanoate dehydrogenase (478 aa).

Residues 148 to 149 (WN), 172 to 175 (KPAT), and 225 to 226 (GS) contribute to the NADP(+) site. Residue Glu-249 is the Proton acceptor of the active site. Cys-283 (nucleophile) is an active-site residue. Glu-379 contributes to the NADP(+) binding site.

This sequence belongs to the aldehyde dehydrogenase family. In terms of assembly, homotetramer.

The enzyme catalyses 2,5-dioxopentanoate + NADP(+) + H2O = 2-oxoglutarate + NADPH + 2 H(+). Its function is as follows. 2,5-dioxopentanoate dehydrogenase involved in the degradation of pentoses such as D-arabinose or D-xylose, a major component of hemicelluloses such as xylan. Catalyzes the fifth reaction in the pentose utilization pathway through dehydratation of 2,5-dioxopentanoate into 2-oxoglutarate. Also shows dehydrogenase activity toward glycolaldehyde and DL-glyceraldehyde. This Saccharolobus solfataricus (strain ATCC 35092 / DSM 1617 / JCM 11322 / P2) (Sulfolobus solfataricus) protein is 2,5-dioxopentanoate dehydrogenase.